The chain runs to 414 residues: Gamma-glutamyl phosphate reductase (414 aa).

Belongs to the gamma-glutamyl phosphate reductase family.

Its subcellular location is the cytoplasm. The catalysed reaction is L-glutamate 5-semialdehyde + phosphate + NADP(+) = L-glutamyl 5-phosphate + NADPH + H(+). Its pathway is amino-acid biosynthesis; L-proline biosynthesis; L-glutamate 5-semialdehyde from L-glutamate: step 2/2. Its function is as follows. Catalyzes the NADPH-dependent reduction of L-glutamate 5-phosphate into L-glutamate 5-semialdehyde and phosphate. The product spontaneously undergoes cyclization to form 1-pyrroline-5-carboxylate. In Francisella philomiragia subsp. philomiragia (strain ATCC 25017 / CCUG 19701 / FSC 153 / O#319-036), this protein is Gamma-glutamyl phosphate reductase.